Reading from the N-terminus, the 356-residue chain is Protein ATP1B4 (356 aa).

The Nuclear segment spans residues 1–109; it reads MRRQLRSRRA…SLARTGQSRS (109 aa). The disordered stretch occupies residues 32 to 77; that stretch reads LADEEEEAEEEAQVMMVPGLEEEEEEEEGKEEEEEREEEEGQGQST. Acidic residues-rich tracts occupy residues 33–43 and 51–72; these read ADEEEEAEEEA and LEEE…EEEG. A helical; Signal-anchor for type II membrane protein membrane pass occupies residues 110–130; it reads LILVIYFFFYASLAAVITLFI. At 131 to 356 the chain is on the perinuclear space side; sequence YMLFLAISPY…RIIFTLNIET (226 aa).

It belongs to the X(+)/potassium ATPases subunit beta family. As to quaternary structure, does not associate with known Na,K-ATPase alpha-subunits. Associates with a SMAD7-transcriptional complex. Interacts with SNW1 and TOR1AIP1. As to expression, expressed in perinatal myocytes (at protein level). Expressed during postnatal development in skeletal muscle and heart.

It localises to the nucleus inner membrane. Functionally, may act as a transcriptional coregulator during muscle development through its interaction with SNW1. Has lost its ancestral function as a Na,K-ATPase beta-subunit. This Rattus norvegicus (Rat) protein is Protein ATP1B4 (Atp1b4).